We begin with the raw amino-acid sequence, 677 residues long: MLSSTDFTSASWELVVRVDHPNEEQQKDVTLRVSGDLHVGGVMLQLVEQINISQDWSDFALWWEQKHCWLLKTHWTLDKYGVQADAKLLFTPQHKMLRLRLPNLKMVRLRVSFSAVVFKAVSDICKTLNIRRSEELSLLKPCGDYFKKKKKKDKNNKEPITEDILNLESSPTASVSSVSPGLYSKTMTPIYDPINGTPASSTMTWFSDSPLTEQNCSILAFSQPPQSSEALADMYQPRSLVDKAKLNAGWLDSSRSLMEQGIQEDGQLLLRFKYYSFFDLNPKYDAVRINQLYEQARWAILLEEIDCTEEEMLIFAALQYHISKLSLSAETQDFTSESEVDEIEAALSNLEVTLEGGKADSLLEDITDIPKLADNLKLFRPKKLLLKAFKQYWFVFKDTSIAYFKNKELEQGEPLEKLNLRGCEVVPNVNVAERKFGIKLLIPVADGMNEMYLRCDHENQYAQWMAACMLASKGKTMADSSYRPEVLNILSFLRMKNRNSASQVASSPENMDMNPECFVSPRCAKKHKSKQLAARILEAHQNVAQMPLVEAKLRFIQAWQSLPEFGLTYYLVRFKGSKKDDILGVSYNRLIKIDAATGIPVTTWRFTNIKQWNVSWETRQVVIEFDQNVFTAFTCLSADCKIVHEYIGGYIFLSTRSKDQNETLDEDLFHKLTGGQD.

The 558-residue stretch at 96–653 (MLRLRLPNLK…HEYIGGYIFL (558 aa)) folds into the FERM domain. S170, S179, and S361 each carry phosphoserine. Residues 337 to 433 (ESEVDEIEAA…EVVPNVNVAE (97 aa)) form the PH domain.

Belongs to the kindlin family. In terms of assembly, interacts with the cytoplasmic domain of integrins ITGB1 and ITGB3.

Its subcellular location is the cytoplasm. It is found in the cytoskeleton. It localises to the cell junction. The protein localises to the focal adhesion. The protein resides in the cell projection. Its subcellular location is the ruffle membrane. Functionally, involved in cell adhesion. Contributes to integrin activation. When coexpressed with talin, potentiates activation of ITGA2B. Required for normal keratinocyte proliferation. Required for normal polarization of basal keratinocytes in skin, and for normal cell shape. Required for normal adhesion of keratinocytes to fibronectin and laminin, and for normal keratinocyte migration to wound sites. In Pongo abelii (Sumatran orangutan), this protein is Fermitin family homolog 1 (FERMT1).